Here is a 168-residue protein sequence, read N- to C-terminus: MQTPQYLQQRRKFAAAFLAFIFILAAVDTAEAGKKEKPEKKVKKSDCGEWQWSVCVPTSGDCGLGTREGTRTGAECKQTMKTQRCKIPCNWKKQFGAECKYQFQAWGECDLNTALKTRTGSLKRALHNADCQKTVTISKPCGKLTKSKPQAESKKKKKEGKKQEKMLD.

Residues 1–32 (MQTPQYLQQRRKFAAAFLAFIFILAAVDTAEA) form the signal peptide. 5 cysteine pairs are disulfide-bonded: Cys47-Cys76, Cys55-Cys85, Cys62-Cys89, Cys99-Cys131, and Cys109-Cys141. 2 chondroitin sulfate binding regions span residues 92–99 (KKQFGAEC) and 123–131 (KRALHNADC). A disordered region spans residues 141 to 168 (CGKLTKSKPQAESKKKKKEGKKQEKMLD). The interval 147–168 (SKPQAESKKKKKEGKKQEKMLD) is chondroitin sulfate A binding.

In terms of assembly, interacts with ALK and NEK6. Interacts with PTPRZ1 (via chondroitin sulfate groups); promotes formation of homooligomers; oligomerization impairs tyrosine phosphatase activity. Forms a complex with PTPRZ1 and CTNNB1; this complex inactivates PTPRZ1 protein tyrosine phosphatase activity through PTN interaction and stimulates tyrosine phosphorylation of CTNNB1. Interacts with ITGB3 and ITGA5. Forms a complex with PTPRZ1 and integrin alpha-V/beta-3 (ITGAV:ITGB3) that stimulates endothelial cell migration through ITGB3 'Tyr-773' phosphorylation. Interacts with SDC3 (via heparan sulfate chains); this interaction mediates the neurite outgrowth-promoting signal from PTN to the cytoskeleton of growing neurites; this interaction mediates osteoblast recruitment. Interacts with GPC2 (via heparan sulfate); this interaction promotes neurite outgrowth through binding of PTN with chondroitin sulfate of proteoglycans, thereby releasing PTPRS of chondroitin sulfate proteoglycans (CSPGs) and leading to binding with heparan sulfate of GPC2. Phosphorylated by NEK6.

The protein localises to the secreted. Its function is as follows. Secreted growth factor that mediates its signal through cell-surface proteoglycan and non-proteoglycan receptors. Binds cell-surface proteoglycan receptor via their chondroitin sulfate (CS) groups. Thereby regulates many processes like cell proliferation, cell survival, cell growth, cell differentiation and cell migration in several tissues namely neuron and bone. Also plays a role in synaptic plasticity and learning-related behavior by inhibiting long-term synaptic potentiation. Binds PTPRZ1, leading to neutralization of the negative charges of the CS chains of PTPRZ1, inducing PTPRZ1 clustering, thereby causing the dimerization and inactivation of its phosphatase activity leading to increased tyrosine phosphorylation of each of the PTPRZ1 substrates like ALK, CTNNB1 or AFAP1L2 in order to activate the PI3K-AKT pathway. Through PTPRZ1 binding controls oligodendrocyte precursor cell differentiation by enhancing the phosphorylation of AFAP1L2 in order to activate the PI3K-AKT pathway. Forms a complex with PTPRZ1 and integrin alpha-V/beta-3 (ITGAV:ITGB3) that stimulates endothelial cell migration through SRC dephosphorylation and activation that consequently leads to ITGB3 'Tyr-773' phosphorylation. In adult hippocampus promotes dendritic arborization, spine development, and functional integration and connectivity of newborn granule neurons through ALK by activating AKT signaling pathway. Binds GPC2 and chondroitin sulfate proteoglycans (CSPGs) at the neuron surface, leading to abrogation of binding between PTPRS and CSPGs and neurite outgrowth promotion. Binds SDC3 and mediates bone formation by recruiting and attaching osteoblasts/osteoblast precursors to the sites for new bone deposition. Binds ALK and promotes cell survival and cell proliferation through MAPK pathway activation. Inhibits proliferation and enhances differentiation of neural stem cells by inhibiting FGF2-induced fibroblast growth factor receptor signaling pathway. Mediates regulatory mechanisms in normal hemostasis and in hematopoietic regeneration and in maintaining the balance of myeloid and lymphoid regeneration. In addition may play a role in the female reproductive system, auditory response and the progesterone-induced decidualization pathway. This is Pleiotrophin from Bos taurus (Bovine).